Consider the following 473-residue polypeptide: Phenolic acid decarboxylase (473 aa).

Mn(2+)-binding residues include asparagine 160, histidine 182, and glutamate 224. Prenylated FMN-binding positions include 160–165 (NVGIYR) and 181–182 (QH). The Proton donor role is filled by glutamate 273.

This sequence belongs to the UbiD family. YclC subfamily. It depends on prenylated FMN as a cofactor. Mn(2+) is required as a cofactor.

The catalysed reaction is 4-hydroxybenzoate + H(+) = phenol + CO2. The enzyme catalyses vanillate + H(+) = guaiacol + CO2. In terms of biological role, involved in the non-oxidative decarboxylation and detoxification of phenolic derivatives under both aerobic and anaerobic conditions. Phenolic acid decarboxylase that catalyzes the reversible decarboxylation of 4-hydroxybenzoate and vanillate. Could also catalyze the decarboxylation of salicylate. Is not active on di- and tri-hydroxybenzoate derivatives. In Bacillus subtilis (strain 168), this protein is Phenolic acid decarboxylase.